The sequence spans 347 residues: D-fructose 1,6-bisphosphatase class 2/sedoheptulose 1,7-bisphosphatase (347 aa).

Asp33, Glu57, Asp97, and Glu100 together coordinate Mn(2+). Residues 100–102 (EGT), Tyr131, 176–178 (RKR), and 198–200 (DGD) each bind substrate. Mn(2+) is bound at residue Glu225.

It belongs to the FBPase class 2 family. As to quaternary structure, homotetramer. Mn(2+) serves as cofactor.

The enzyme catalyses beta-D-fructose 1,6-bisphosphate + H2O = beta-D-fructose 6-phosphate + phosphate. The catalysed reaction is D-sedoheptulose 1,7-bisphosphate + H2O = D-sedoheptulose 7-phosphate + phosphate. Its pathway is carbohydrate biosynthesis; Calvin cycle. In terms of biological role, catalyzes the hydrolysis of fructose 1,6-bisphosphate (Fru 1,6-P2) and sedoheptulose 1,7-bisphosphate (Sed 1,7-P2) to fructose 6-phosphate and sedoheptulose 7-phosphate, respectively. In Synechococcus sp. (strain JA-2-3B'a(2-13)) (Cyanobacteria bacterium Yellowstone B-Prime), this protein is D-fructose 1,6-bisphosphatase class 2/sedoheptulose 1,7-bisphosphatase.